The following is a 396-amino-acid chain: Putative 3-phosphoinositide-dependent protein kinase 2 (396 aa).

Residues 1 to 11 (MVRTQTESSTP) show a composition bias toward polar residues. The tract at residues 1–53 (MVRTQTESSTPPGIPGGSRQGPAMDGTAAEPRPGAGSLQHAQPPPQPRKKRPE) is disordered. In terms of domain architecture, Protein kinase spans 55-315 (FKFGKILGEG…YGPLKAHPFF (261 aa)). ATP contacts are provided by residues 65–67 (SFS) and Lys84. Residues 86-130 (LEKRHIIKENKVPYVTRERDVMSRLDHPFFVKLYFTFQDDEKLYF) are PIF-pocket. ATP contacts are provided by residues 133-135 (SYA) and Glu139. The active-site Proton acceptor is the Asp178. ATP contacts are provided by Glu182 and Asp196.

Belongs to the protein kinase superfamily. AGC Ser/Thr protein kinase family. PDPK1 subfamily. Phosphorylated on tyrosine and serine/threonine.

The protein localises to the cytoplasm. Its subcellular location is the membrane. It catalyses the reaction L-seryl-[protein] + ATP = O-phospho-L-seryl-[protein] + ADP + H(+). The enzyme catalyses L-threonyl-[protein] + ATP = O-phospho-L-threonyl-[protein] + ADP + H(+). Functionally, phosphorylates and activates not only PKB/AKT, but also PKA, PKC-zeta, RPS6KA1 and RPS6KB1. May play a general role in signaling processes and in development. The sequence is that of Putative 3-phosphoinositide-dependent protein kinase 2 from Homo sapiens (Human).